Here is a 156-residue protein sequence, read N- to C-terminus: Crossover junction endodeoxyribonuclease RuvC (156 aa).

Active-site residues include D7, E67, and D140. Mg(2+)-binding residues include D7, E67, and D140.

Belongs to the RuvC family. As to quaternary structure, homodimer which binds Holliday junction (HJ) DNA. The HJ becomes 2-fold symmetrical on binding to RuvC with unstacked arms; it has a different conformation from HJ DNA in complex with RuvA. In the full resolvosome a probable DNA-RuvA(4)-RuvB(12)-RuvC(2) complex forms which resolves the HJ. Mg(2+) serves as cofactor.

The protein localises to the cytoplasm. It carries out the reaction Endonucleolytic cleavage at a junction such as a reciprocal single-stranded crossover between two homologous DNA duplexes (Holliday junction).. In terms of biological role, the RuvA-RuvB-RuvC complex processes Holliday junction (HJ) DNA during genetic recombination and DNA repair. Endonuclease that resolves HJ intermediates. Cleaves cruciform DNA by making single-stranded nicks across the HJ at symmetrical positions within the homologous arms, yielding a 5'-phosphate and a 3'-hydroxyl group; requires a central core of homology in the junction. The consensus cleavage sequence is 5'-(A/T)TT(C/G)-3'. Cleavage occurs on the 3'-side of the TT dinucleotide at the point of strand exchange. HJ branch migration catalyzed by RuvA-RuvB allows RuvC to scan DNA until it finds its consensus sequence, where it cleaves and resolves the cruciform DNA. This is Crossover junction endodeoxyribonuclease RuvC from Rickettsia felis (strain ATCC VR-1525 / URRWXCal2) (Rickettsia azadi).